Here is a 350-residue protein sequence, read N- to C-terminus: Small ribosomal subunit biogenesis GTPase RsgA (350 aa).

The span at 1–17 shows a compositional bias: polar residues; the sequence is MSKNKLSKGQQRRVNAN. The disordered stretch occupies residues 1–33; it reads MSKNKLSKGQQRRVNANHQRRLKTSKEKPDYDD. The region spanning 104–273 is the CP-type G domain; sequence TSVLTRPDFY…VIDSPGVREF (170 aa). GTP is bound by residues 160-163 and 214-222; these read NKID and GQSGVGKSS. Residues Cys-297, Cys-302, His-304, and Cys-310 each contribute to the Zn(2+) site.

This sequence belongs to the TRAFAC class YlqF/YawG GTPase family. RsgA subfamily. As to quaternary structure, monomer. Associates with 30S ribosomal subunit, binds 16S rRNA. It depends on Zn(2+) as a cofactor.

Its subcellular location is the cytoplasm. Functionally, one of several proteins that assist in the late maturation steps of the functional core of the 30S ribosomal subunit. Helps release RbfA from mature subunits. May play a role in the assembly of ribosomal proteins into the subunit. Circularly permuted GTPase that catalyzes slow GTP hydrolysis, GTPase activity is stimulated by the 30S ribosomal subunit. The chain is Small ribosomal subunit biogenesis GTPase RsgA from Escherichia coli (strain SMS-3-5 / SECEC).